A 226-amino-acid chain; its full sequence is ATP-dependent dethiobiotin synthetase BioD (226 aa).

12 to 17 (GVGKTV) contacts ATP. T16 is a binding site for Mg(2+). The active site involves K37. T41 is a substrate binding site. ATP contacts are provided by residues D49, 108–111 (EGAG), 169–170 (GS), and 197–199 (PAG). Residues D49 and E108 each coordinate Mg(2+).

This sequence belongs to the dethiobiotin synthetase family. As to quaternary structure, homodimer. Mg(2+) serves as cofactor.

It is found in the cytoplasm. The catalysed reaction is (7R,8S)-7,8-diammoniononanoate + CO2 + ATP = (4R,5S)-dethiobiotin + ADP + phosphate + 3 H(+). It participates in cofactor biosynthesis; biotin biosynthesis; biotin from 7,8-diaminononanoate: step 1/2. Catalyzes a mechanistically unusual reaction, the ATP-dependent insertion of CO2 between the N7 and N8 nitrogen atoms of 7,8-diaminopelargonic acid (DAPA, also called 7,8-diammoniononanoate) to form a ureido ring. This Mycobacterium bovis (strain ATCC BAA-935 / AF2122/97) protein is ATP-dependent dethiobiotin synthetase BioD.